Consider the following 166-residue polypeptide: Orotate phosphoribosyltransferase (166 aa).

5-phospho-alpha-D-ribose 1-diphosphate contacts are provided by residues Arg-83, Lys-84, Arg-86, His-88, and Glu-108–Ser-116. Orotate contacts are provided by Thr-112 and Arg-140.

This sequence belongs to the purine/pyrimidine phosphoribosyltransferase family. PyrE subfamily. Homodimer. The cofactor is Mg(2+).

It catalyses the reaction orotidine 5'-phosphate + diphosphate = orotate + 5-phospho-alpha-D-ribose 1-diphosphate. It functions in the pathway pyrimidine metabolism; UMP biosynthesis via de novo pathway; UMP from orotate: step 1/2. Its function is as follows. Catalyzes the transfer of a ribosyl phosphate group from 5-phosphoribose 1-diphosphate to orotate, leading to the formation of orotidine monophosphate (OMP). The protein is Orotate phosphoribosyltransferase of Thermoplasma volcanium (strain ATCC 51530 / DSM 4299 / JCM 9571 / NBRC 15438 / GSS1).